The following is a 504-amino-acid chain: Cobyric acid synthase (504 aa).

A GATase cobBQ-type domain is found at 251-448 (DITIAIVQLP…LHGLFDSDAF (198 aa)). Cys332 serves as the catalytic Nucleophile. His440 is an active-site residue.

This sequence belongs to the CobB/CobQ family. CobQ subfamily.

It functions in the pathway cofactor biosynthesis; adenosylcobalamin biosynthesis. Functionally, catalyzes amidations at positions B, D, E, and G on adenosylcobyrinic A,C-diamide. NH(2) groups are provided by glutamine, and one molecule of ATP is hydrogenolyzed for each amidation. This Salmonella gallinarum (strain 287/91 / NCTC 13346) protein is Cobyric acid synthase.